We begin with the raw amino-acid sequence, 525 residues long: Tigger transposable element-derived protein 2 (525 aa).

Residues 1–52 (MLGKRKRVVLTIKDKLDIIKKLEEGISFKKLSVVYGIGESTVRDIKKNKERI) enclose the HTH psq-type domain. DNA-binding regions (H-T-H motif) lie at residues 28–48 (FKKL…IKKN) and 100–132 (TICA…FKQR). The HTH CENPB-type domain maps to 67–139 (KRKSMKSSTY…KQRHGIPKAA (73 aa)). One can recognise a DDE-1 domain in the interval 168–385 (LQPEQIYGAD…VKSSTITKAW (218 aa)). Residues 442-474 (QVLTDSESAEDQTKAAEQKPSSKSRKTELNPEK) form a disordered region.

This sequence belongs to the tigger transposable element derived protein family.

It localises to the nucleus. The polypeptide is Tigger transposable element-derived protein 2 (TIGD2) (Homo sapiens (Human)).